Reading from the N-terminus, the 323-residue chain is L-lactate dehydrogenase (323 aa).

Residues V18, D39, R44, Y69, and 83–84 contribute to the NAD(+) site; that span reads GA. Residues Q86 and R92 each contribute to the substrate site. NAD(+) is bound by residues T105, 122–124, and S147; that span reads AAN. 124-127 serves as a coordination point for substrate; it reads NPVD. Residue 152-155 participates in substrate binding; that stretch reads DTAR. The active-site Proton acceptor is H179. Y223 is modified (phosphotyrosine). Residue T232 coordinates substrate.

The protein belongs to the LDH/MDH superfamily. LDH family. As to quaternary structure, homotetramer.

Its subcellular location is the cytoplasm. The enzyme catalyses (S)-lactate + NAD(+) = pyruvate + NADH + H(+). It participates in fermentation; pyruvate fermentation to lactate; (S)-lactate from pyruvate: step 1/1. Catalyzes the conversion of lactate to pyruvate. The protein is L-lactate dehydrogenase of Pediococcus acidilactici.